Here is a 52-residue protein sequence, read N- to C-terminus: Phospholamban (52 aa).

Met-1 bears the N-acetylmethionine mark. The Cytoplasmic portion of the chain corresponds to Met-1 to Leu-31. Phosphoserine; by PKA and DMPK is present on Ser-16. Thr-17 is subject to Phosphothreonine; by CaMK2. Residues Phe-32–Leu-52 traverse the membrane as a helical segment. A lipid anchor (S-palmitoyl cysteine) is attached at Cys-36.

It belongs to the phospholamban family. Homopentamer. Can also form heterooligomers with other sarcoplasmic/endoplasmic reticulum calcium ATPase (SERCA) regulators ARLN, ERLN, SLN and STRIT1/DWORF. Monomer. Interacts with HAX1. Interacts as a monomer with ATP2A2; the interaction decreases ATP2A2 Ca(2+) affinity. Interacts with VMP1; VMP1 competes with PLN and SLN to prevent them from forming an inhibitory complex with ATP2A2. Interacts with S100A1 in a Ca(2+)-dependent manner. Post-translationally, phosphorylation by DMPK may stimulate sarcoplasmic reticulum calcium uptake in cardiomyocytes. Phosphorylation by PKA abolishes the inhibition of ATP2A2-mediated calcium uptake. Phosphorylated at Thr-17 by CaMK2, and in response to beta-adrenergic stimulation. Palmitoylated by ZDHHC16, promoting formation of the homopentamer. In terms of processing, in elongated spermatids, proteolytically cleaved by SPPL2C which modulates intracellular Ca(2+) homeostasis. In terms of tissue distribution, heart.

It localises to the endoplasmic reticulum membrane. It is found in the sarcoplasmic reticulum membrane. The protein resides in the mitochondrion membrane. The protein localises to the membrane. Its function is as follows. Reversibly inhibits the activity of ATP2A2/SERCA2 in cardiac sarcoplasmic reticulum by decreasing the apparent affinity of the ATPase for Ca(2+). Binds preferentially to the ATP-bound E1 conformational form of ATP2A2 which predominates at low Ca(2+) concentrations during the diastolic phase of the cardiac cycle. Inhibits ATP2A2 Ca(2+) affinity by disrupting its allosteric activation by ATP. Modulates the contractility of the heart muscle in response to physiological stimuli via its effects on ATP2A2. Modulates calcium re-uptake during muscle relaxation and plays an important role in calcium homeostasis in the heart muscle. The degree of ATP2A2 inhibition depends on the oligomeric state of PLN. ATP2A2 inhibition is alleviated by PLN phosphorylation. Also inhibits the activity of ATP2A3/SERCA3. Controls intracellular Ca(2+) levels in elongated spermatids and may play a role in germ cell differentiation. In the thalamic reticular nucleus of the brain, plays a role in the regulation of sleep patterns and executive functioning. The chain is Phospholamban from Canis lupus familiaris (Dog).